The sequence spans 495 residues: ATP synthase subunit beta, chloroplastic (495 aa).

Residue Gly172–Thr179 coordinates ATP.

This sequence belongs to the ATPase alpha/beta chains family. F-type ATPases have 2 components, CF(1) - the catalytic core - and CF(0) - the membrane proton channel. CF(1) has five subunits: alpha(3), beta(3), gamma(1), delta(1), epsilon(1). CF(0) has four main subunits: a(1), b(1), b'(1) and c(9-12).

Its subcellular location is the plastid. It localises to the chloroplast thylakoid membrane. It carries out the reaction ATP + H2O + 4 H(+)(in) = ADP + phosphate + 5 H(+)(out). Functionally, produces ATP from ADP in the presence of a proton gradient across the membrane. The catalytic sites are hosted primarily by the beta subunits. The polypeptide is ATP synthase subunit beta, chloroplastic (Hyacinthoides non-scripta (English bluebell)).